Consider the following 178-residue polypeptide: uncharacterized protein (178 aa).

The tract at residues 152 to 178 is disordered; it reads KKLKGAEPKEHQAPNFEPPTEIFPESN.

This sequence belongs to the EUO family.

This is an uncharacterized protein from Chlamydia pneumoniae (Chlamydophila pneumoniae).